Reading from the N-terminus, the 737-residue chain is Elongation factor 2 (737 aa).

One can recognise a tr-type G domain in the interval 18-262 (TRVRNIGIIA…AVIKFVPNPR (245 aa)). Residues 27–34 (AHVDHGKT), 93–97 (DTPGH), and 147–150 (NKVD) contribute to the GTP site. His-604 is modified (diphthamide).

Belongs to the TRAFAC class translation factor GTPase superfamily. Classic translation factor GTPase family. EF-G/EF-2 subfamily.

The protein resides in the cytoplasm. Catalyzes the GTP-dependent ribosomal translocation step during translation elongation. During this step, the ribosome changes from the pre-translocational (PRE) to the post-translocational (POST) state as the newly formed A-site-bound peptidyl-tRNA and P-site-bound deacylated tRNA move to the P and E sites, respectively. Catalyzes the coordinated movement of the two tRNA molecules, the mRNA and conformational changes in the ribosome. This chain is Elongation factor 2 (fusA), found in Sulfolobus acidocaldarius (strain ATCC 33909 / DSM 639 / JCM 8929 / NBRC 15157 / NCIMB 11770).